Here is a 368-residue protein sequence, read N- to C-terminus: Uroporphyrinogen decarboxylase (368 aa).

Substrate contacts are provided by residues 41-45, Asp91, Tyr168, Ser223, and His345; that span reads RQAGR.

Belongs to the uroporphyrinogen decarboxylase family. As to quaternary structure, homodimer.

Its subcellular location is the cytoplasm. The enzyme catalyses uroporphyrinogen III + 4 H(+) = coproporphyrinogen III + 4 CO2. The protein operates within porphyrin-containing compound metabolism; protoporphyrin-IX biosynthesis; coproporphyrinogen-III from 5-aminolevulinate: step 4/4. Catalyzes the decarboxylation of four acetate groups of uroporphyrinogen-III to yield coproporphyrinogen-III. This chain is Uroporphyrinogen decarboxylase, found in Psychrobacter sp. (strain PRwf-1).